A 448-amino-acid chain; its full sequence is Probable protein phosphatase 2C 74 (448 aa).

Positions 1 to 48 (MGSCLSSSGGGGSRRSLHGSPHVPGPGRRKRPPKRRPGSCSSSFDNTE) are disordered. Residue glycine 2 is the site of N-myristoyl glycine attachment. A compositionally biased stretch (basic residues) spans 27 to 37 (GRRKRPPKRRP). The region spanning 67–384 (TVSLFSQQGK…DDCAVVCLFL (318 aa)) is the PPM-type phosphatase domain. Residues aspartate 103, glycine 104, aspartate 329, and aspartate 375 each contribute to the Mn(2+) site. A disordered region spans residues 401 to 431 (HINNGVTEPEPDTASSSTPDSGTGSPELNGV). Over residues 412-426 (DTASSSTPDSGTGSP) the composition is skewed to low complexity.

This sequence belongs to the PP2C family. In terms of assembly, interacts with KIN10. The cofactor is Mg(2+). It depends on Mn(2+) as a cofactor. In terms of tissue distribution, expressed in the whole plant.

It is found in the cell membrane. The catalysed reaction is O-phospho-L-seryl-[protein] + H2O = L-seryl-[protein] + phosphate. The enzyme catalyses O-phospho-L-threonyl-[protein] + H2O = L-threonyl-[protein] + phosphate. Functionally, acts as a protein phosphatase. This Arabidopsis thaliana (Mouse-ear cress) protein is Probable protein phosphatase 2C 74.